The primary structure comprises 187 residues: UPF0200 protein APE_1753.1 (187 aa).

13-20 (GLPGSGKS) contributes to the ATP binding site.

It belongs to the UPF0200 family.

The polypeptide is UPF0200 protein APE_1753.1 (Aeropyrum pernix (strain ATCC 700893 / DSM 11879 / JCM 9820 / NBRC 100138 / K1)).